Consider the following 182-residue polypeptide: ATP synthase subunit delta (182 aa).

Belongs to the ATPase delta chain family. As to quaternary structure, F-type ATPases have 2 components, F(1) - the catalytic core - and F(0) - the membrane proton channel. F(1) has five subunits: alpha(3), beta(3), gamma(1), delta(1), epsilon(1). F(0) has three main subunits: a(1), b(2) and c(10-14). The alpha and beta chains form an alternating ring which encloses part of the gamma chain. F(1) is attached to F(0) by a central stalk formed by the gamma and epsilon chains, while a peripheral stalk is formed by the delta and b chains.

Its subcellular location is the cell membrane. Its activity is regulated as follows. Increases 2-fold following exposure to low pH. Its function is as follows. F(1)F(0) ATP synthase produces ATP from ADP in the presence of a proton or sodium gradient. F-type ATPases consist of two structural domains, F(1) containing the extramembraneous catalytic core and F(0) containing the membrane proton channel, linked together by a central stalk and a peripheral stalk. During catalysis, ATP synthesis in the catalytic domain of F(1) is coupled via a rotary mechanism of the central stalk subunits to proton translocation. In terms of biological role, this protein is part of the stalk that links CF(0) to CF(1). It either transmits conformational changes from CF(0) to CF(1) or is implicated in proton conduction. The protein is ATP synthase subunit delta of Lactobacillus acidophilus (strain ATCC 700396 / NCK56 / N2 / NCFM).